The sequence spans 409 residues: Serine/threonine transporter SstT (409 aa).

The next 9 helical transmembrane spans lie at leucine 17–alanine 37, phenylalanine 49–isoleucine 69, isoleucine 83–phenylalanine 103, alanine 142–phenylalanine 162, valine 180–alanine 200, leucine 218–phenylalanine 238, methionine 299–isoleucine 319, valine 331–isoleucine 351, and leucine 357–isoleucine 377.

It belongs to the dicarboxylate/amino acid:cation symporter (DAACS) (TC 2.A.23) family.

It localises to the cell inner membrane. It catalyses the reaction L-serine(in) + Na(+)(in) = L-serine(out) + Na(+)(out). It carries out the reaction L-threonine(in) + Na(+)(in) = L-threonine(out) + Na(+)(out). In terms of biological role, involved in the import of serine and threonine into the cell, with the concomitant import of sodium (symport system). In Pseudomonas paraeruginosa (strain DSM 24068 / PA7) (Pseudomonas aeruginosa (strain PA7)), this protein is Serine/threonine transporter SstT.